The following is a 321-amino-acid chain: MSDFYHKPVLLEESVHWLVSESGMYIDATLGGAGHSKEILHRLETQHLLSNSLLIGIDRDANAIRAATTRLATYAAHAHILRGRFADLKLLLETNGLLDSGNHPIRGILLDLGISSHQIDAPARGFSFQQSGPLDMRMSDTAQLTAAEVVNHYDERSLSKIFFDYGEEREAKWIARKIVEARKQTPLETTAALALLIRQNLNRKSPVEQTKTLARIFQAIRIEVNGELDELKAVLQAAHEVLSEKGRLVVISYHSLEDRIVKQFFNECASEDWGPKGVVLDVPIKTATMKILTKKPVLASEEEIQENSRARSAKLRVAEKI.

S-adenosyl-L-methionine-binding positions include 33–35 (AGH), D58, F85, D111, and Q118.

Belongs to the methyltransferase superfamily. RsmH family.

The protein resides in the cytoplasm. The catalysed reaction is cytidine(1402) in 16S rRNA + S-adenosyl-L-methionine = N(4)-methylcytidine(1402) in 16S rRNA + S-adenosyl-L-homocysteine + H(+). Specifically methylates the N4 position of cytidine in position 1402 (C1402) of 16S rRNA. The chain is Ribosomal RNA small subunit methyltransferase H from Chloroherpeton thalassium (strain ATCC 35110 / GB-78).